A 283-amino-acid chain; its full sequence is Bifunctional protein FolD (283 aa).

NADP(+) contacts are provided by residues 164–166 (GSS), isoleucine 189, and isoleucine 230.

It belongs to the tetrahydrofolate dehydrogenase/cyclohydrolase family. Homodimer.

It carries out the reaction (6R)-5,10-methylene-5,6,7,8-tetrahydrofolate + NADP(+) = (6R)-5,10-methenyltetrahydrofolate + NADPH. The enzyme catalyses (6R)-5,10-methenyltetrahydrofolate + H2O = (6R)-10-formyltetrahydrofolate + H(+). The protein operates within one-carbon metabolism; tetrahydrofolate interconversion. Functionally, catalyzes the oxidation of 5,10-methylenetetrahydrofolate to 5,10-methenyltetrahydrofolate and then the hydrolysis of 5,10-methenyltetrahydrofolate to 10-formyltetrahydrofolate. The chain is Bifunctional protein FolD from Fusobacterium nucleatum subsp. nucleatum (strain ATCC 25586 / DSM 15643 / BCRC 10681 / CIP 101130 / JCM 8532 / KCTC 2640 / LMG 13131 / VPI 4355).